The sequence spans 90 residues: Small ribosomal subunit protein bS16 (90 aa).

It belongs to the bacterial ribosomal protein bS16 family.

In Lactococcus lactis subsp. lactis (strain IL1403) (Streptococcus lactis), this protein is Small ribosomal subunit protein bS16.